The primary structure comprises 113 residues: Cytochrome c oxidase subunit 7A2-like, mitochondrial (113 aa).

The N-terminal 54 residues, 1–54 (MYYKFSSFTQKLAGAWASEAYTPQGLKPVSTEAPPIIFATPTKLTSSVTAYDYS), are a transit peptide targeting the mitochondrion. An N6-acetyllysine modification is found at lysine 68. Residues 81–106 (PDQMLYRTTMALTLGGTIYCLIALYM) traverse the membrane as a helical segment.

Belongs to the cytochrome c oxidase VIIa family. Interacts with the mitochondrial respiratory complexes III (CIII) and IV (CIV), promoting their association.

It localises to the mitochondrion inner membrane. The protein operates within energy metabolism; oxidative phosphorylation. Functionally, assembly factor that mediates the formation of some mitochondrial respiratory supercomplexes (respirasomes), thereby promoting oxidative phosphorylation and energy metabolism. Acts as a molecular adapter that associates with both mitochondrial respiratory complexes III (CIII) and IV (CIV), promoting their association. Mediates the formation of various mitochondrial respiratory supercomplexes, such as MCIII(2)IV(2), composed of two CIII and two CIV, and the CS-respirasome (MCI(1)III(2)IV(2)), composed of one CI, two CIII and two CIV. Not involved in the formation of the canonical respirasome (MCI(1)III(2)IV(1)), composed of one CI, two CIII and one CIV. The formation of different respirasomes is important for cell adaptation to oxygen conditions and prevent metabolic exhaustion: supercomplexes mediated by COX7A2L/SCAF1 are required to maintain oxidative phosphorylation upon low oxygen conditions and promote metabolic rewiring toward glycolysis. This Mus musculus (Mouse) protein is Cytochrome c oxidase subunit 7A2-like, mitochondrial.